Reading from the N-terminus, the 492-residue chain is Cytochrome P450 2L1 (492 aa).

Residue Cys436 participates in heme binding.

The protein belongs to the cytochrome P450 family. Heme is required as a cofactor.

It localises to the endoplasmic reticulum membrane. The protein localises to the microsome membrane. The enzyme catalyses an organic molecule + reduced [NADPH--hemoprotein reductase] + O2 = an alcohol + oxidized [NADPH--hemoprotein reductase] + H2O + H(+). In terms of biological role, efficient in catalyzing the monooxygenation of benzphetamine, aminopyrine, benzo(a)pyrene, progesterone, and testosterone. This Panulirus argus (Caribbean spiny lobster) protein is Cytochrome P450 2L1 (CYP2L1).